Consider the following 446-residue polypeptide: Calcium-binding and coiled-coil domain-containing protein 2 (446 aa).

The CLIR signature appears at 133 to 136 (ILVV). The stretch at 137-349 (TTQGEVEEIE…RENSRLLSYM (213 aa)) forms a coiled coil. The LIR-like motif lies at 203–206 (DYWE). The interval 362-390 (TSDEGGARQNPGLAYGNPYSGIQESSSPS) is disordered. The interaction with LGALS8 stretch occupies residues 371-381 (NPGLAYGNPYS). Over residues 381–390 (SGIQESSSPS) the composition is skewed to polar residues. Residues 395–446 (KKCPICKADDICDHTLEQQQMQPLCFNCPICDKIFPATEKQIFEDHVFCHSL) are interaction with MYO6. The UBZ1-type zinc-finger motif lies at 419–444 (CFNCPICDKIFPATEKQIFEDHVFCH). Zn(2+)-binding residues include Cys422, Cys425, His440, and His444. Ser445 is subject to Phosphoserine.

It belongs to the CALCOCO family. As to quaternary structure, dimer. Part of a complex consisting of CALCOCO2, TAX1BP1 and MYO6. Interacts with MYO6. Interacts with GEMIN4. Interacts with ATG8 family members MAP1LC3A, MAP1LC3B, GABARAP, GABARAPL1 and GABARAPL2. Interacts with ATG8 family member MAP1LC3C. Interacts with LGALS8. Interacts with TOM1; the interaction is indirect and is mediated by MYO6, which acts as a bridge between TOM1 and CALCOCO2. Interacts with AZI2. In terms of assembly, (Microbial infection) Interacts with Lassa virus protein Z. (Microbial infection) Interacts with Mopeia virus protein Z. In terms of processing, (Microbial infection) Cleaved by S.pyogenes SpeB protease; leading to its degradation. Degradation by SpeB prevents autophagy, promoting to S.pyogenes intracellular replication. Expressed in all tissues tested with highest expression in skeletal muscle and lowest in brain.

The protein resides in the cytoplasm. Its subcellular location is the perinuclear region. The protein localises to the cytoskeleton. It localises to the cytoplasmic vesicle. It is found in the autophagosome membrane. Xenophagy-specific receptor required for autophagy-mediated intracellular bacteria degradation. Acts as an effector protein of galectin-sensed membrane damage that restricts the proliferation of infecting pathogens such as Salmonella typhimurium upon entry into the cytosol by targeting LGALS8-associated bacteria for autophagy. Initially orchestrates bacteria targeting to autophagosomes and subsequently ensures pathogen degradation by regulating pathogen-containing autophagosome maturation. Bacteria targeting to autophagosomes relies on its interaction with MAP1LC3A, MAP1LC3B and/or GABARAPL2, whereas regulation of pathogen-containing autophagosome maturation requires the interaction with MAP3LC3C. May play a role in ruffle formation and actin cytoskeleton organization and seems to negatively regulate constitutive secretion. This chain is Calcium-binding and coiled-coil domain-containing protein 2 (CALCOCO2), found in Homo sapiens (Human).